Consider the following 279-residue polypeptide: 4-diphosphocytidyl-2-C-methyl-D-erythritol kinase (279 aa).

K10 is a catalytic residue. 91 to 101 (PVASGIGGGSA) is an ATP binding site. Residue D130 is part of the active site.

This sequence belongs to the GHMP kinase family. IspE subfamily.

It carries out the reaction 4-CDP-2-C-methyl-D-erythritol + ATP = 4-CDP-2-C-methyl-D-erythritol 2-phosphate + ADP + H(+). It functions in the pathway isoprenoid biosynthesis; isopentenyl diphosphate biosynthesis via DXP pathway; isopentenyl diphosphate from 1-deoxy-D-xylulose 5-phosphate: step 3/6. In terms of biological role, catalyzes the phosphorylation of the position 2 hydroxy group of 4-diphosphocytidyl-2C-methyl-D-erythritol. This chain is 4-diphosphocytidyl-2-C-methyl-D-erythritol kinase, found in Ruegeria pomeroyi (strain ATCC 700808 / DSM 15171 / DSS-3) (Silicibacter pomeroyi).